Here is a 318-residue protein sequence, read N- to C-terminus: Thymidylate synthase (318 aa).

DUMP contacts are provided by residues arginine 26 and 181–182 (RR). The active-site Nucleophile is cysteine 201. Residues 221 to 224 (RSAD), asparagine 232, and 262 to 264 (HIY) contribute to the dUMP site. Aspartate 224 provides a ligand contact to (6R)-5,10-methylene-5,6,7,8-tetrahydrofolate. Alanine 317 serves as a coordination point for (6R)-5,10-methylene-5,6,7,8-tetrahydrofolate.

The protein belongs to the thymidylate synthase family. Bacterial-type ThyA subfamily. As to quaternary structure, homodimer.

The protein resides in the cytoplasm. It carries out the reaction dUMP + (6R)-5,10-methylene-5,6,7,8-tetrahydrofolate = 7,8-dihydrofolate + dTMP. It participates in pyrimidine metabolism; dTTP biosynthesis. In terms of biological role, catalyzes the reductive methylation of 2'-deoxyuridine-5'-monophosphate (dUMP) to 2'-deoxythymidine-5'-monophosphate (dTMP) while utilizing 5,10-methylenetetrahydrofolate (mTHF) as the methyl donor and reductant in the reaction, yielding dihydrofolate (DHF) as a by-product. This enzymatic reaction provides an intracellular de novo source of dTMP, an essential precursor for DNA biosynthesis. This chain is Thymidylate synthase, found in Staphylococcus haemolyticus (strain JCSC1435).